Reading from the N-terminus, the 323-residue chain is Chitin-binding lectin 1 (323 aa).

The first 22 residues, 1 to 22, serve as a signal peptide directing secretion; that stretch reads MKETAISVLALLTLFLLEVVSA. 4 positions are modified to 4-hydroxyproline: Pro-50, Pro-51, Pro-53, and Pro-55. O-linked (Ara...) hydroxyproline glycans are attached at residues Pro-50, Pro-51, Pro-53, and Pro-55. Chitin-binding type-1 domains are found at residues 58–101 and 105–149; these read YPQC…QCPG and EGRC…QCKL. Intrachain disulfides connect Cys-61/Cys-77, Cys-70/Cys-83, Cys-76/Cys-90, Cys-95/Cys-99, Cys-108/Cys-125, Cys-117/Cys-131, Cys-124/Cys-138, and Cys-143/Cys-147. Residues Ser-78, Trp-80, Trp-82, and Tyr-89 each coordinate chitin. The segment at 150-210 is extensin-like; it reads PSPPPPPPPP…PPPPPPALPY (61 aa). Ser-151 carries O-linked (Gal) serine glycosylation. 10 tandem repeats follow at residues 151 to 159, 160 to 164, 165 to 167, 168 to 172, 173 to 180, 181 to 185, 186 to 190, 191 to 192, 193 to 198, and 200 to 206. The 10 X approximate repeats of S-P-P-P-P stretch occupies residues 151–206; that stretch reads SPPPPPPPPSPPPPSPPSPPPPSPPPPPPPSPPPPSPPPPSPSPPPPPASPPPPPP. 4-hydroxyproline occurs at positions 152, 153, 154, 155, 156, 157, 158, and 159. Residues Pro-152, Pro-153, Pro-154, Pro-155, Pro-156, Pro-157, Pro-158, and Pro-159 are each glycosylated (O-linked (Ara...) hydroxyproline). The interval 154-203 is disordered; that stretch reads PPPPPPSPPPPSPPSPPPPSPPPPPPPSPPPPSPPPPSPSPPPPPASPPP. Ser-160 carries an O-linked (Gal) serine glycan. A 4-hydroxyproline mark is found at Pro-161, Pro-162, Pro-163, and Pro-164. Residues Pro-161, Pro-162, Pro-163, and Pro-164 are each glycosylated (O-linked (Ara...) hydroxyproline). Ser-165 carries O-linked (Gal) serine glycosylation. A 4-hydroxyproline mark is found at Pro-166 and Pro-167. O-linked (Ara...) hydroxyproline glycans are attached at residues Pro-166 and Pro-167. Ser-168 is a glycosylation site (O-linked (Gal) serine). Pro-169, Pro-170, Pro-171, and Pro-172 each carry 4-hydroxyproline. 4 O-linked (Ara...) hydroxyproline glycosylation sites follow: Pro-169, Pro-170, Pro-171, and Pro-172. The O-linked (Gal) serine glycan is linked to Ser-173. Residues Pro-174, Pro-175, Pro-176, Pro-177, Pro-178, Pro-179, and Pro-180 each carry the 4-hydroxyproline modification. 7 O-linked (Ara...) hydroxyproline glycosylation sites follow: Pro-174, Pro-175, Pro-176, Pro-177, Pro-178, Pro-179, and Pro-180. Ser-181 is a glycosylation site (O-linked (Gal) serine). Residues Pro-182, Pro-183, Pro-184, and Pro-185 each carry the 4-hydroxyproline modification. Pro-182, Pro-183, Pro-184, and Pro-185 each carry an O-linked (Ara...) hydroxyproline glycan. The O-linked (Gal) serine glycan is linked to Ser-186. Residues Pro-187, Pro-188, Pro-189, and Pro-190 each carry the 4-hydroxyproline modification. 4 O-linked (Ara...) hydroxyproline glycosylation sites follow: Pro-187, Pro-188, Pro-189, and Pro-190. A glycan (O-linked (Gal) serine) is linked at Ser-191. Pro-192 carries the post-translational modification 4-hydroxyproline. O-linked (Ara...) hydroxyproline glycosylation is present at Pro-192. Ser-193 carries an O-linked (Gal) serine glycan. 4-hydroxyproline occurs at positions 194, 195, 196, 197, and 198. Residues Pro-194, Pro-195, Pro-196, Pro-197, and Pro-198 are each glycosylated (O-linked (Ara...) hydroxyproline). A glycan (O-linked (Gal) serine) is linked at Ser-200. Residues Pro-201, Pro-202, Pro-203, Pro-204, Pro-205, Pro-206, and Pro-209 each carry the 4-hydroxyproline modification. 7 O-linked (Ara...) hydroxyproline glycosylation sites follow: Pro-201, Pro-202, Pro-203, Pro-204, Pro-205, Pro-206, and Pro-209. Chitin-binding type-1 domains follow at residues 210–253 and 257–301; these read YPQC…QCPG and EGRC…QCNT. 8 cysteine pairs are disulfide-bonded: Cys-213–Cys-229, Cys-222–Cys-235, Cys-228–Cys-242, Cys-247–Cys-251, Cys-260–Cys-277, Cys-269–Cys-283, Cys-276–Cys-290, and Cys-295–Cys-299. 4 residues coordinate chitin: Ser-230, Trp-232, Trp-234, and Tyr-241.

This sequence in the central section; belongs to the extensin family. Homodimer. Heavily glycosylated with beta-arabinose on hydroxyprolines and with alpha-galactose on serines of the extensin-like domain. As no other sugars could be detected in the native lectin, it is unlikely that the three putative N-glycosylation sites are actually glycosylated. Post-translationally, the N-terminus is blocked. The N-terminal sequences proposed in PubMed:9022287 and PubMed:11056399 originate probably from truncated proteins.

This protein might function as a defense against chitin containing pathogens. Binds to several branched or linear N-acetyllactosamine-containing glycosphingolipids and also to lactosylceramide with sphingosine and non-hydroxy fatty acids. This Solanum tuberosum (Potato) protein is Chitin-binding lectin 1.